A 123-amino-acid polypeptide reads, in one-letter code: MKKNFRVKREKDFKAIFKEGTSFANRKFVVYQLENQKNRFRVGLSVSKKLGNAVTRNQIKRRIRHIIQNAKGSLVEDVDFVVIARKGVETLGYAEMEKNLLHVLKLSKIYREGNGSEKETKVD.

This sequence belongs to the RnpA family. As to quaternary structure, consists of a catalytic RNA component (M1 or rnpB) and a protein subunit.

It carries out the reaction Endonucleolytic cleavage of RNA, removing 5'-extranucleotides from tRNA precursor.. Functionally, RNaseP catalyzes the removal of the 5'-leader sequence from pre-tRNA to produce the mature 5'-terminus. It can also cleave other RNA substrates such as 4.5S RNA. The protein component plays an auxiliary but essential role in vivo by binding to the 5'-leader sequence and broadening the substrate specificity of the ribozyme. This is Ribonuclease P protein component from Streptococcus pneumoniae serotype 4 (strain ATCC BAA-334 / TIGR4).